Consider the following 237-residue polypeptide: Proteasome subunit beta type-1-B (237 aa).

The protein belongs to the peptidase T1B family. As to quaternary structure, the 26S proteasome consists of a 20S proteasome core and two 19S regulatory subunits. The 20S proteasome core is composed of 28 subunits that are arranged in four stacked rings, resulting in a barrel-shaped structure. The two end rings are each formed by seven alpha subunits, and the two central rings are each formed by seven beta subunits. The catalytic chamber with the active sites is on the inside of the barrel.

The protein localises to the cytoplasm. The protein resides in the nucleus. Non-catalytic component of the proteasome, a multicatalytic proteinase complex which is characterized by its ability to cleave peptides with Arg, Phe, Tyr, Leu, and Glu adjacent to the leaving group at neutral or slightly basic pH. The proteasome has an ATP-dependent proteolytic activity. This chain is Proteasome subunit beta type-1-B (psmb1-B), found in Carassius auratus (Goldfish).